The following is an 84-amino-acid chain: U8-theraphotoxin-Hhn1f (84 aa).

The first 21 residues, M1 to C21, serve as a signal peptide directing secretion. Disulfide bonds link C23-C35, C29-C44, C34-C67, C54-C75, and C69-C81.

Belongs to the AVIT (prokineticin) family. Expressed by the venom gland.

Its subcellular location is the secreted. This Cyriopagopus hainanus (Chinese bird spider) protein is U8-theraphotoxin-Hhn1f.